Consider the following 976-residue polypeptide: Metabotropic glutamate receptor (976 aa).

Residues 1-25 form the signal peptide; the sequence is MKQKNNNGTILVVVMVLSWSRVVDL. Residues 26 to 626 are Extracellular-facing; that stretch reads KSPSNTHTQD…IQYMKWNSLF (601 aa). 2 N-linked (GlcNAc...) asparagine glycosylation sites follow: asparagine 112 and asparagine 143. L-glutamate-binding positions include serine 158 and 179-181; that span reads AST. A glycan (N-linked (GlcNAc...) asparagine) is linked at asparagine 216. Position 229 (tyrosine 229) interacts with L-glutamate. A glycan (N-linked (GlcNAc...) asparagine) is linked at asparagine 299. Residue aspartate 310 coordinates L-glutamate. Asparagine 386 carries N-linked (GlcNAc...) asparagine glycosylation. Residue lysine 417 coordinates L-glutamate. Residues asparagine 491 and asparagine 524 are each glycosylated (N-linked (GlcNAc...) asparagine). Residues 627-649 form a helical membrane-spanning segment; that stretch reads ALIPMAIAIFGIALTSIVIVLFA. The Cytoplasmic segment spans residues 650–663; sequence KNHDTPLVRASGRE. A helical transmembrane segment spans residues 664 to 684; that stretch reads LSYTLLFGILVCYCNTFALIA. The Extracellular segment spans residues 685–695; it reads KPTIGSCVLQR. Residues 696–714 form a helical membrane-spanning segment; that stretch reads FGIGVGFSIIYSALLTKTN. Residues 715 to 738 lie on the Cytoplasmic side of the membrane; it reads RISRIFHSASKSAQRLKYISPQSQ. Residues 739–759 form a helical membrane-spanning segment; it reads VVITTSLIAIQVLITMIWMVV. The Extracellular portion of the chain corresponds to 760–782; sequence EPPGTRFYYPDRREVILKCKIQD. A helical membrane pass occupies residues 783–804; the sequence is MSFLFSQLYNMILITICTIYAI. Over 805-817 the chain is Cytoplasmic; that stretch reads KTRKIPENFNESK. Residues 818–840 traverse the membrane as a helical segment; the sequence is FIGFTMYTTCIIWLAFVPIYFGT. At 841–850 the chain is on the extracellular side; that stretch reads GNSYEVQTTT. The helical transmembrane segment at 851 to 876 threads the bilayer; sequence LCISISLSASVALVCLYSPKVYILVF. Residues 877 to 976 lie on the Cytoplasmic side of the membrane; the sequence is HPDKNVRKLT…VEPICHIVNK (100 aa). A disordered region spans residues 920–946; sequence LTGGAVGTNASSSTLPTQNSPHLDEAS. Polar residues predominate over residues 927 to 946; it reads TNASSSTLPTQNSPHLDEAS.

Belongs to the G-protein coupled receptor 3 family. Expressed in the neurons of the larval CNS from the beginning of the first until the third instar. Expression in the third-instar larval CNS is restricted to a discrete number of somas and projections in the brain lobes and in the ventral ganglion. In the ventral nerve cord, expression is detected both in somas and projections. Expressed in the antennal lobes, the optic lobes, the central complex and the median bundle in the adult CNS.

Its subcellular location is the cell membrane. G-protein coupled receptor for glutamate. Ligand binding causes a conformation change that triggers signaling via guanine nucleotide-binding proteins (G proteins) and modulates the activity of down-stream effectors. This Drosophila melanogaster (Fruit fly) protein is Metabotropic glutamate receptor (mGluR).